Consider the following 94-residue polypeptide: Integration host factor subunit beta (94 aa).

Belongs to the bacterial histone-like protein family. In terms of assembly, heterodimer of an alpha and a beta chain.

In terms of biological role, this protein is one of the two subunits of integration host factor, a specific DNA-binding protein that functions in genetic recombination as well as in transcriptional and translational control. This is Integration host factor subunit beta from Vibrio atlanticus (strain LGP32) (Vibrio splendidus (strain Mel32)).